The following is a 60-amino-acid chain: Large ribosomal subunit protein uL30 (60 aa).

Belongs to the universal ribosomal protein uL30 family. As to quaternary structure, part of the 50S ribosomal subunit.

The polypeptide is Large ribosomal subunit protein uL30 (Sphingopyxis alaskensis (strain DSM 13593 / LMG 18877 / RB2256) (Sphingomonas alaskensis)).